The sequence spans 1090 residues: Nitrogen assimilation transcription factor nit-4 (1090 aa).

A compositionally biased stretch (polar residues) spans 1–14; the sequence is MNSSDVQMMSSQDA. Positions 1-43 are disordered; it reads MNSSDVQMMSSQDAPGSAGLAPDNIASSLPSKKKSRRGADPTN. Residues 53–81 constitute a DNA-binding region (zn(2)-C6 fungal-type); that stretch reads CIACRRRKSKCDGALPSCAACASVYGTEC. Disordered regions lie at residues 145–176, 666–689, 773–798, 825–875, 936–999, and 1033–1053; these read RRDE…SQAV, FSTS…PAPP, HQHH…YQQQ, GIPT…VKPP, QGWD…QRQQ, and HGAE…TTVG. The segment covering 167-176 has biased composition (basic and acidic residues); it reads GRDDATSQAV. Over residues 666–677 the composition is skewed to polar residues; that stretch reads FSTSEVPSPNRT. Over residues 849–859 the composition is skewed to low complexity; it reads QPQQQQQPQAQ. 2 stretches are compositionally biased toward gly residues: residues 940–965 and 976–988; these read LEGG…GGAG and NIGG…GGST. Positions 990–999 are enriched in low complexity; the sequence is QRQQQQQRQQ.

It localises to the nucleus. Functionally, pathway-specific regulatory gene of nitrate assimilation; it activates the transcription of the genes for nitrate and nitrite reductases. This is Nitrogen assimilation transcription factor nit-4 (nit-4) from Neurospora crassa (strain ATCC 24698 / 74-OR23-1A / CBS 708.71 / DSM 1257 / FGSC 987).